Here is a 301-residue protein sequence, read N- to C-terminus: Ornithine carbamoyltransferase (301 aa).

Carbamoyl phosphate contacts are provided by residues R100 and 127–130 (HPCQ). L-ornithine is bound by residues N158, D221, and 225–226 (SM). Carbamoyl phosphate-binding positions include 260–261 (CL) and R288.

The protein belongs to the aspartate/ornithine carbamoyltransferase superfamily. OTCase family.

The protein resides in the cytoplasm. It carries out the reaction carbamoyl phosphate + L-ornithine = L-citrulline + phosphate + H(+). It participates in amino-acid biosynthesis; L-arginine biosynthesis; L-arginine from L-ornithine and carbamoyl phosphate: step 1/3. Functionally, reversibly catalyzes the transfer of the carbamoyl group from carbamoyl phosphate (CP) to the N(epsilon) atom of ornithine (ORN) to produce L-citrulline. The chain is Ornithine carbamoyltransferase from Shewanella oneidensis (strain ATCC 700550 / JCM 31522 / CIP 106686 / LMG 19005 / NCIMB 14063 / MR-1).